The primary structure comprises 507 residues: Glycine, alanine and asparagine-rich protein (507 aa).

The N-terminal stretch at 1-17 is a signal peptide; sequence MLRVPLLVLCLALSVGA. The stretch at 158 to 185 forms a coiled coil; sequence SAQALASATAELQAAQDAYDQASAYAEA. Positions 462–498 are enriched in gly residues; sequence GNGNGGNGRNGNGGNGRNGNGGNGGNGNGRNGRGGRY. The tract at residues 462-507 is disordered; the sequence is GNGNGGNGRNGNGGNGRNGNGGNGGNGNGRNGRGGRYYYGSSDYYY.

In terms of tissue distribution, component of the acid-soluble and acid-insoluble organic matrix of calcified shell layers (at protein level).

The protein resides in the secreted. This Haliotis asinina (Donkey's ear abalone) protein is Glycine, alanine and asparagine-rich protein.